A 351-amino-acid chain; its full sequence is Peptide chain release factor 1 (351 aa).

At Gln-229 the chain carries N5-methylglutamine.

This sequence belongs to the prokaryotic/mitochondrial release factor family. In terms of processing, methylated by PrmC. Methylation increases the termination efficiency of RF1.

The protein resides in the cytoplasm. In terms of biological role, peptide chain release factor 1 directs the termination of translation in response to the peptide chain termination codons UAG and UAA. The sequence is that of Peptide chain release factor 1 from Cereibacter sphaeroides (strain ATCC 17025 / ATH 2.4.3) (Rhodobacter sphaeroides).